The sequence spans 547 residues: Beta,beta-carotene 15,15'-dioxygenase (547 aa).

His172, His237, His308, and His514 together coordinate Fe cation. The segment covering 528–540 (QAASEEQRDRASD) has biased composition (basic and acidic residues). The interval 528 to 547 (QAASEEQRDRASDCHGAPLT) is disordered.

This sequence belongs to the carotenoid oxygenase family. It depends on Fe(2+) as a cofactor. Highly expressed in retinal pigment epithelium. Also expressed in kidney, testis, liver, brain, small intestine and colon.

It is found in the cytoplasm. Its subcellular location is the cytosol. The catalysed reaction is all-trans-beta-carotene + O2 = 2 all-trans-retinal. It participates in cofactor metabolism; retinol metabolism. Its function is as follows. Symmetrically cleaves beta-carotene into two molecules of retinal using a dioxygenase mechanism. In Homo sapiens (Human), this protein is Beta,beta-carotene 15,15'-dioxygenase.